Consider the following 314-residue polypeptide: tRNA dimethylallyltransferase 1 (314 aa).

17 to 24 (GPTAAGKT) contacts ATP. Residue 19–24 (TAAGKT) participates in substrate binding. The interaction with substrate tRNA stretch occupies residues 42-45 (DSRQ).

This sequence belongs to the IPP transferase family. In terms of assembly, monomer. It depends on Mg(2+) as a cofactor.

It catalyses the reaction adenosine(37) in tRNA + dimethylallyl diphosphate = N(6)-dimethylallyladenosine(37) in tRNA + diphosphate. Functionally, catalyzes the transfer of a dimethylallyl group onto the adenine at position 37 in tRNAs that read codons beginning with uridine, leading to the formation of N6-(dimethylallyl)adenosine (i(6)A). This is tRNA dimethylallyltransferase 1 from Syntrophotalea carbinolica (strain DSM 2380 / NBRC 103641 / GraBd1) (Pelobacter carbinolicus).